The sequence spans 423 residues: Polyglutamylase complex subunit TTLL1 (423 aa).

The TTL domain maps to 1-367; that stretch reads MAGKVKWVTD…NGEIPDCKWN (367 aa). Residues K138, 144–145, 181–184, and 194–196 contribute to the ATP site; these read QG, SLYI, and KFD. Position 144 (Q144) interacts with a protein. R220 is a binding site for L-glutamate. 241-242 is an ATP binding site; it reads TN. K259 contacts L-glutamate. Mg(2+) is bound by residues D313, E326, and N328. K344 contributes to the L-glutamate binding site. Positions 391-423 are disordered; that stretch reads GADRELRSRQGQSLGPRAGRSRDSGRAVLTTWK.

The protein belongs to the tubulin polyglutamylase family. As to quaternary structure, part of the neuronal tubulin polyglutamylase complex which contains TPGS1, TPGS2, TTLL1, LRRC49 and NICN1. Interacts with PCM1, CSTPP1 and LRRC49. Mg(2+) is required as a cofactor. In terms of tissue distribution, expressed in a wide range of tissues. Has a stronger expression in heart, brain and testis.

The protein resides in the cytoplasm. The protein localises to the cytoskeleton. Its subcellular location is the cilium basal body. It localises to the cilium axoneme. It is found in the cell projection. The protein resides in the cilium. The protein localises to the flagellum. The catalysed reaction is (L-glutamyl)(n)-gamma-L-glutamyl-L-glutamyl-[protein] + L-glutamate + ATP = (L-glutamyl)(n+1)-gamma-L-glutamyl-L-glutamyl-[protein] + ADP + phosphate + H(+). Its function is as follows. Catalytic subunit of a polyglutamylase complex which modifies tubulin, generating side chains of glutamate on the gamma-carboxyl group of specific glutamate residues within the C-terminal tail of tubulin. Probably involved in the side-chain elongation step of the polyglutamylation reaction rather than the initiation step. Modifies both alpha- and beta-tubulins with a preference for the alpha-tail. Unlike most polyglutamylases of the tubulin--tyrosine ligase family, only displays a catalytic activity when in complex with other proteins as it is most likely lacking domains important for autonomous activity. Part of the neuronal tubulin polyglutamylase complex. Mediates cilia and flagella polyglutamylation which is essential for their biogenesis and motility. Involved in respiratory motile cilia function through the regulation of beating asymmetry. Essential for sperm flagella biogenesis, motility and male fertility. Involved in KLF4 glutamylation which impedes its ubiquitination, thereby leading to somatic cell reprogramming, pluripotency maintenance and embryogenesis. The sequence is that of Polyglutamylase complex subunit TTLL1 from Homo sapiens (Human).